Consider the following 189-residue polypeptide: Peptidyl-tRNA hydrolase (189 aa).

Residue Tyr-15 participates in tRNA binding. His-20 functions as the Proton acceptor in the catalytic mechanism. Residues Phe-66, Asn-68, and Asn-114 each contribute to the tRNA site.

It belongs to the PTH family. In terms of assembly, monomer.

The protein resides in the cytoplasm. It catalyses the reaction an N-acyl-L-alpha-aminoacyl-tRNA + H2O = an N-acyl-L-amino acid + a tRNA + H(+). In terms of biological role, hydrolyzes ribosome-free peptidyl-tRNAs (with 1 or more amino acids incorporated), which drop off the ribosome during protein synthesis, or as a result of ribosome stalling. Catalyzes the release of premature peptidyl moieties from peptidyl-tRNA molecules trapped in stalled 50S ribosomal subunits, and thus maintains levels of free tRNAs and 50S ribosomes. This chain is Peptidyl-tRNA hydrolase, found in Streptococcus pneumoniae (strain P1031).